Consider the following 184-residue polypeptide: MMQTILSNGIAMVLIILIINIVYVSFFTIRMILTLKGQRYLAAGISTIEILVYVTGLSLVLDNLDQIQNVIAYALGYGLGVIVGMKIEEKLALGYIMVNVITKELDLDLPKQLREKGYGVTNWVAGGLEGDRTALQILTPRRYELQLYDTIKTLDSKAFIIAYEPKTIHGGFWVKAVKKRRIKE.

Transmembrane regions (helical) follow at residues 9 to 29, 41 to 61, and 67 to 87; these read GIAM…FFTI, LAAG…SLVL, and IQNV…GMKI.

The protein belongs to the UPF0316 family.

The protein resides in the cell membrane. In Bacillus subtilis (strain 168), this protein is UPF0316 protein YebE (yebE).